The following is a 245-amino-acid chain: Heat shock transcription factor (245 aa).

Residues 17-115 (KSGFVNRLYR…LISLITRDKS (99 aa)) mediate DNA binding. An involved in trimerization region spans residues 130 to 169 (SLQYLASCNYKQQKEINDLKDRIKTLETKYATLYEIISNA).

The protein belongs to the HSF family. As to quaternary structure, homotrimer. Homotrimerization increases the affinity of HSF1 to DNA.

The protein resides in the nucleus. Its function is as follows. DNA-binding transcription factor that specifically binds heat shock promoter elements (HSE) and activates transcription. The chain is Heat shock transcription factor from Enterocytozoon bieneusi (strain H348) (Microsporidian parasite).